A 115-amino-acid chain; its full sequence is Large ribosomal subunit protein P2 (115 aa).

N-acetylmethionine is present on Met1. Ser17 and Ser19 each carry phosphoserine. Lys21 carries the post-translational modification N6-acetyllysine; alternate. At Lys21 the chain carries N6-succinyllysine; alternate. Over residues Gly78 to Ala90 the composition is skewed to low complexity. Residues Gly78–Asp115 form a disordered region. 2 positions are modified to phosphoserine: Ser79 and Ser86. The segment covering Ala91–Glu101 has biased composition (basic and acidic residues). Phosphoserine is present on residues Ser102 and Ser105.

The protein belongs to the eukaryotic ribosomal protein P1/P2 family. Heterodimer with P1 at the lateral ribosomal stalk of the large ribosomal subunit.

Plays an important role in the elongation step of protein synthesis. The protein is Large ribosomal subunit protein P2 (RPLP2) of Homo sapiens (Human).